Consider the following 331-residue polypeptide: tRNA-dihydrouridine(20/20a) synthase (331 aa).

Residues 18–20 and Gln-70 contribute to the FMN site; that span reads PML. Cys-100 serves as the catalytic Proton donor. FMN-binding positions include Lys-139, His-172, 212–214, and 234–235; these read NGG and GR.

The protein belongs to the Dus family. DusA subfamily. Requires FMN as cofactor.

The catalysed reaction is 5,6-dihydrouridine(20) in tRNA + NADP(+) = uridine(20) in tRNA + NADPH + H(+). The enzyme catalyses 5,6-dihydrouridine(20) in tRNA + NAD(+) = uridine(20) in tRNA + NADH + H(+). It catalyses the reaction 5,6-dihydrouridine(20a) in tRNA + NADP(+) = uridine(20a) in tRNA + NADPH + H(+). It carries out the reaction 5,6-dihydrouridine(20a) in tRNA + NAD(+) = uridine(20a) in tRNA + NADH + H(+). Catalyzes the synthesis of 5,6-dihydrouridine (D), a modified base found in the D-loop of most tRNAs, via the reduction of the C5-C6 double bond in target uridines. Specifically modifies U20 and U20a in tRNAs. The sequence is that of tRNA-dihydrouridine(20/20a) synthase from Escherichia coli O6:H1 (strain CFT073 / ATCC 700928 / UPEC).